We begin with the raw amino-acid sequence, 243 residues long: CAVP-target protein (243 aa).

The interval 1–22 (PKPPAEAKPAAKPAAPPAAANP) is disordered. Residues 7–20 (AKPAAKPAAPPAAA) show a composition bias toward low complexity. Residues 35–62 (SAATRIQASFRMHKNRMALKEKSIPKFS) form the IQ domain. Ig-like C2-type domains follow at residues 59–150 (PKFS…LALE) and 151–243 (VPAK…VKVN).

This protein is the target of CAVP, which binds to it in a calcium-dependent manner. This chain is CAVP-target protein, found in Branchiostoma lanceolatum (Common lancelet).